We begin with the raw amino-acid sequence, 477 residues long: Delayed-rectifier potassium channel regulatory subunit KCNS2 (477 aa).

Topologically, residues 1 to 184 (MTGQSLWDVS…LALDNPGYSV (184 aa)) are cytoplasmic. Residues 185 to 206 (LSRVFSILSILVVMGSIITMCL) traverse the membrane as a helical segment. The Extracellular portion of the chain corresponds to 207–225 (NSLPDFQIPDSQGNPGEDP). The chain crosses the membrane as a helical span at residues 226-248 (RFEIVEHFGIAWFTFELVARFAV). The Cytoplasmic portion of the chain corresponds to 249 to 259 (APDFLKFFKNA). Residues 260 to 280 (LNLIDLMSIVPFYITLVVNLV) form a helical membrane-spanning segment. The Extracellular segment spans residues 281–290 (VESTPTLANL). The helical; Voltage-sensor transmembrane segment at 291-311 (GRVAQVLRLMRIFRILKLARH) threads the bilayer. Topologically, residues 312–326 (STGLRSLGATLKYSY) are cytoplasmic. Residues 327–348 (KEVGLLLLYLSVGISIFSVVAY) traverse the membrane as a helical segment. Topologically, residues 349–361 (TIEKEENEGLATI) are extracellular. An intramembrane region (helical) is located at residues 362 to 373 (PACWWWATVSMT). A Selectivity filter motif is present at residues 374–379 (TVGYGD). The stretch at 374-381 (TVGYGDVV) is an intramembrane region. The Extracellular segment spans residues 382–388 (PGTTAGK). A helical transmembrane segment spans residues 389–417 (LTASACILAGILVVVLPITLIFNKFSHFY). At 418-477 (RRQKQLESAMRSCDFGDGMKEVPSVNLRDYYAHKVKSLMASLTNMSRSSPSELSLNDSLR) the chain is on the cytoplasmic side.

The protein belongs to the potassium channel family. S (TC 1.A.1.2) subfamily. Kv9.2/KCNS2 sub-subfamily. As to quaternary structure, heterotetramer with KCNB1 and KCNB2. Does not form homomultimers.

Its subcellular location is the cell membrane. In terms of biological role, potassium channel regulatory subunit that modulate the delayed rectifier voltage-gated potassium channel activity of KCNB1 and KCNB2 by altering their kinetics, expression levels, and shifting the half-inactivation potential to more polarized values. While it does not form functional channels on its own, it can form functional heterotetrameric channels with KCNB1 and KCNB2. Each regulatory subunit has unique regulatory properties that can lead to extensive inhibition, significant changes in kinetics, and/or substantial shifts in the voltage dependencies of the inactivation process. The protein is Delayed-rectifier potassium channel regulatory subunit KCNS2 of Homo sapiens (Human).